Reading from the N-terminus, the 808-residue chain is Probable phosphoketolase 1 (808 aa).

It belongs to the XFP family. Thiamine diphosphate is required as a cofactor.

The protein is Probable phosphoketolase 1 of Nostoc sp. (strain PCC 7120 / SAG 25.82 / UTEX 2576).